A 163-amino-acid chain; its full sequence is Lipoprotein signal peptidase (163 aa).

3 helical membrane-spanning segments follow: residues I3–L23, N70–N90, and I94–F114. Active-site residues include D125 and D143. The chain crosses the membrane as a helical span at residues W134–I154.

This sequence belongs to the peptidase A8 family.

The protein localises to the cell membrane. The catalysed reaction is Release of signal peptides from bacterial membrane prolipoproteins. Hydrolyzes -Xaa-Yaa-Zaa-|-(S,diacylglyceryl)Cys-, in which Xaa is hydrophobic (preferably Leu), and Yaa (Ala or Ser) and Zaa (Gly or Ala) have small, neutral side chains.. The protein operates within protein modification; lipoprotein biosynthesis (signal peptide cleavage). Functionally, this protein specifically catalyzes the removal of signal peptides from prolipoproteins. The sequence is that of Lipoprotein signal peptidase from Buchnera aphidicola subsp. Baizongia pistaciae (strain Bp).